A 200-amino-acid polypeptide reads, in one-letter code: NAD(P)H dehydrogenase (quinone) (200 aa).

One can recognise a Flavodoxin-like domain in the interval 4 to 191; the sequence is ILVLYHSLWG…TIARFQGRHV (188 aa). FMN contacts are provided by residues 10–15 and 79–81; these read SLWGHV and TRF. An NAD(+)-binding site is contributed by Trp-12. Trp-99 serves as a coordination point for substrate. FMN-binding positions include 114 to 120 and His-135; that span reads STATQHG.

Belongs to the WrbA family. The cofactor is FMN.

The enzyme catalyses a quinone + NADH + H(+) = a quinol + NAD(+). It catalyses the reaction a quinone + NADPH + H(+) = a quinol + NADP(+). The sequence is that of NAD(P)H dehydrogenase (quinone) from Acidithiobacillus ferrooxidans (strain ATCC 53993 / BNL-5-31) (Leptospirillum ferrooxidans (ATCC 53993)).